The primary structure comprises 197 residues: Large ribosomal subunit protein bL9 (197 aa).

The disordered stretch occupies residues 178 to 197 (GEFFDPEAQEDEAAAGETAQ). A compositionally biased stretch (acidic residues) spans 181–191 (FDPEAQEDEAA).

This sequence belongs to the bacterial ribosomal protein bL9 family.

Binds to the 23S rRNA. This is Large ribosomal subunit protein bL9 from Bradyrhizobium sp. (strain BTAi1 / ATCC BAA-1182).